Consider the following 687-residue polypeptide: Epithelial splicing regulatory protein 1 (687 aa).

RRM domains lie at 226 to 303 (TIIR…KATG), 327 to 407 (VIVR…RSTA), and 446 to 526 (DCIR…QCSA).

This sequence belongs to the ESRP family.

It is found in the nucleus. In terms of biological role, mRNA splicing factor that regulates the formation of epithelial cell-specific isoforms. Specifically regulates the expression of FGFR2-IIIb, an epithelial cell-specific isoform of fgfr2. Acts by directly binding specific sequences in mRNAs. Binds the GU-rich sequence motifs in the ISE/ISS-3, a cis-element regulatory region present in the mRNA of fgfr2. In Xenopus tropicalis (Western clawed frog), this protein is Epithelial splicing regulatory protein 1 (esrp1).